The primary structure comprises 181 residues: Photosystem I assembly protein Ycf4 (181 aa).

The next 2 helical transmembrane spans lie at 19 to 39 and 61 to 81; these read YFWA…GISS and IVMM…MATL.

Belongs to the Ycf4 family.

It is found in the plastid. The protein localises to the chloroplast thylakoid membrane. In terms of biological role, seems to be required for the assembly of the photosystem I complex. The chain is Photosystem I assembly protein Ycf4 from Thalassiosira pseudonana (Marine diatom).